Reading from the N-terminus, the 350-residue chain is MQINHWQYLSSKPESTGIFKQQPDDFVVQEILGYEPVGEGEHIYLWVRKEGLNTAYLAEQIAKFAQLPLRAVTYAGRKDKHSVSEQWFGVHKPGKAEYDWSALNVPGATVLKAIRHNKKLRTGVLKGNKFTILMRDVTPSDDLAQRIAQVSLSGAPNYYGPQRFGDSRYDPKGSNLMLAEKMINGEVIRNRNKRSMAISALRSWLFNEVLSERINAGDFAQPLEGDVMSLAGNASYFVSDDIDDTIKQRLATRDITISAPLWGKGELASTGSALAFEKSVVMNHPKITKTLASLGLEQERRPIVLYPSNLTWAWEQNNLRIAFELPAGTFATSVLREILNVESVDTGPSE.

The Nucleophile role is filled by D79. The TRUD domain maps to 154 to 306; that stretch reads GAPNYYGPQR…EQERRPIVLY (153 aa).

Belongs to the pseudouridine synthase TruD family.

The enzyme catalyses uridine(13) in tRNA = pseudouridine(13) in tRNA. Responsible for synthesis of pseudouridine from uracil-13 in transfer RNAs. The polypeptide is tRNA pseudouridine synthase D (Pseudoalteromonas atlantica (strain T6c / ATCC BAA-1087)).